The chain runs to 391 residues: 4-hydroxy-3-methylbut-2-en-1-yl diphosphate synthase (flavodoxin) (391 aa).

C281, C284, C316, and E323 together coordinate [4Fe-4S] cluster. The segment at 372–391 is disordered; the sequence is EMGGEDGQGGIKGSPVVSVS.

This sequence belongs to the IspG family. The cofactor is [4Fe-4S] cluster.

It carries out the reaction (2E)-4-hydroxy-3-methylbut-2-enyl diphosphate + oxidized [flavodoxin] + H2O + 2 H(+) = 2-C-methyl-D-erythritol 2,4-cyclic diphosphate + reduced [flavodoxin]. It participates in isoprenoid biosynthesis; isopentenyl diphosphate biosynthesis via DXP pathway; isopentenyl diphosphate from 1-deoxy-D-xylulose 5-phosphate: step 5/6. Converts 2C-methyl-D-erythritol 2,4-cyclodiphosphate (ME-2,4cPP) into 1-hydroxy-2-methyl-2-(E)-butenyl 4-diphosphate. In Renibacterium salmoninarum (strain ATCC 33209 / DSM 20767 / JCM 11484 / NBRC 15589 / NCIMB 2235), this protein is 4-hydroxy-3-methylbut-2-en-1-yl diphosphate synthase (flavodoxin).